The chain runs to 492 residues: Protein nucleotidyltransferase YdiU (492 aa).

Residues G95, G97, R98, K118, D130, G131, R181, and R188 each contribute to the ATP site. Catalysis depends on D257, which acts as the Proton acceptor. Positions 258 and 267 each coordinate Mg(2+). D267 is a binding site for ATP. Over residues Y466–Y475 the composition is skewed to basic and acidic residues. The interval Y466–T492 is disordered.

The protein belongs to the SELO family. Mg(2+) is required as a cofactor. It depends on Mn(2+) as a cofactor.

It catalyses the reaction L-seryl-[protein] + ATP = 3-O-(5'-adenylyl)-L-seryl-[protein] + diphosphate. It carries out the reaction L-threonyl-[protein] + ATP = 3-O-(5'-adenylyl)-L-threonyl-[protein] + diphosphate. The catalysed reaction is L-tyrosyl-[protein] + ATP = O-(5'-adenylyl)-L-tyrosyl-[protein] + diphosphate. The enzyme catalyses L-histidyl-[protein] + UTP = N(tele)-(5'-uridylyl)-L-histidyl-[protein] + diphosphate. It catalyses the reaction L-seryl-[protein] + UTP = O-(5'-uridylyl)-L-seryl-[protein] + diphosphate. It carries out the reaction L-tyrosyl-[protein] + UTP = O-(5'-uridylyl)-L-tyrosyl-[protein] + diphosphate. Its function is as follows. Nucleotidyltransferase involved in the post-translational modification of proteins. It can catalyze the addition of adenosine monophosphate (AMP) or uridine monophosphate (UMP) to a protein, resulting in modifications known as AMPylation and UMPylation. The sequence is that of Protein nucleotidyltransferase YdiU from Syntrophotalea carbinolica (strain DSM 2380 / NBRC 103641 / GraBd1) (Pelobacter carbinolicus).